The chain runs to 591 residues: MTQGKIIKVSGPLVIASGMQEANIQDICRVGKLGLIGEIIEMRRDQASIQVYEETSGLGPGEPVVTTGEPLSVELGPGLISQMFDGIQRPLDRFKLATHNDFLVRGVEVPSLDRDIKWHFDSTIAIGQKVSTGDILGTVKETEVVNHKIMVPYGVSGXVVSIASGDFTIDEVVYEIKKLDGSFYKGTLMQKWPVRKARPVSKRLIPEEPLITGQRVIDAFFPVTKGGAAAVPGPFGAGKTVVQHQVAKFANVDIVIYVGCGERGNEMTDVLNEFPELIDPNTGQSIMQRTVLIANTSNMPVAAREASIYTGITMAEYFRDMGYSVAIMADSTSRWAEALREMSGRLEEMPGDEGYPAYLGSRIAEYYERAGRSQVLGLPEREGTITAIGAVSPPGGDISEPVTQNTLRIVKVFWGLDAPLAQRRHFPAINWLTSYSLYKDSVGTYIDGKEKTDWNSKITRAMNYLQRESSLEEIVRLVGIDSLSDNERLTMEIAKQIREDYLQQNAFDSVDTFTSFAKQEAMLSNILTFADQANHALELGSYFTEIMEGTVAVRDRMARSKYVSEDRLDEIKIISNEITHQIHLILETGGL.

233 to 240 (GPFGAGKT) contributes to the ATP binding site.

The protein belongs to the ATPase alpha/beta chains family.

The catalysed reaction is ATP + H2O + 4 H(+)(in) = ADP + phosphate + 5 H(+)(out). Produces ATP from ADP in the presence of a proton gradient across the membrane. The V-type alpha chain is a catalytic subunit. The chain is V-type ATP synthase alpha chain from Streptococcus pneumoniae serotype 19F (strain G54).